Consider the following 423-residue polypeptide: Voltage-dependent calcium channel gamma-8 subunit (423 aa).

4 consecutive transmembrane segments (helical) span residues 19-39 (VQVL…TIAI), 127-147 (SSIF…CVAA), 157-177 (IILG…IGVI), and 207-227 (FGGL…NIYI). A phosphoserine mark is found at Ser251 and Ser254. Positions 271-304 (RRSRSSSRGSSEASPSRDASPGGPGGPGFASTDI) are disordered. Over residues 276 to 287 (SSRGSSEASPSR) the composition is skewed to low complexity. Residues 318 to 338 (VAAGLASAGGGGSGAGVGAYG) traverse the membrane as a helical segment. 2 disordered regions span residues 342–363 (GAAG…GFLT) and 378–423 (VTVT…TTPV). A compositionally biased stretch (pro residues) spans 384-399 (PAAPAPAPAPPAPAAP). A compositionally biased stretch (polar residues) spans 410–423 (ASNTNTLNRKTTPV).

The protein belongs to the PMP-22/EMP/MP20 family. CACNG subfamily. As to quaternary structure, interacts with CACNA1C. Identified in a complex with the L-type calcium channel subunits CACNA1C, CACNA2D1 and either CACNB1 or CACNB2. Acts as an auxiliary subunit for AMPA-selective glutamate receptors (AMPARs). Found in a complex with GRIA1, GRIA2, GRIA3, GRIA4, CNIH2, CNIH3, CACNG2, CACNG3, CACNG4, CACNG5 and CACNG7. Interacts with CNIH2. Found in a complex with GRIA1, GRIA2, GRIA3, GRIA4, DLG4 and CNIH2. In terms of processing, palmitoylated. Probably palmitoylated by ZDHHC3 and ZDHHC7.

The protein resides in the cell membrane. The protein localises to the postsynaptic density membrane. Regulates the activity of L-type calcium channels that contain CACNA1C as pore-forming subunit. Regulates the trafficking and gating properties of AMPA-selective glutamate receptors (AMPARs). Promotes their targeting to the cell membrane and synapses and modulates their gating properties by slowing their rates of activation, deactivation and desensitization and by mediating their resensitization. Does not show subunit-specific AMPA receptor regulation and regulates all AMPAR subunits. Thought to stabilize the calcium channel in an inactivated (closed) state. This Mus musculus (Mouse) protein is Voltage-dependent calcium channel gamma-8 subunit.